The primary structure comprises 348 residues: Protein arginine N-methyltransferase 1 (348 aa).

Residues Glu-20–Lys-322 enclose the SAM-dependent MTase PRMT-type domain. S-adenosyl-L-methionine is bound by residues His-33, Arg-42, Gly-66, Asp-88, and Glu-117. Residues Glu-132 and Glu-141 contribute to the active site.

This sequence belongs to the class I-like SAM-binding methyltransferase superfamily. Protein arginine N-methyltransferase family. In terms of assembly, homodimer. The dimers can then associate to form a ring-shaped homohexamer. Interacts with NPL3, BRE5, MTR4, SNF2, SUM1, and SSD1.

It is found in the nucleus. The catalysed reaction is L-arginyl-[protein] + S-adenosyl-L-methionine = N(omega)-methyl-L-arginyl-[protein] + S-adenosyl-L-homocysteine + H(+). It carries out the reaction L-arginyl-[protein] + 2 S-adenosyl-L-methionine = N(omega),N(omega)-dimethyl-L-arginyl-[protein] + 2 S-adenosyl-L-homocysteine + 2 H(+). In terms of biological role, S-adenosyl-L-methionine-dependent protein-arginine N-methyltransferase that catalyzes both the mono- and asymmetric (type I) dimethylation of the guanidino nitrogens of arginine residues in a variety of RNA-binding proteins such as heterogeneous nuclear ribonucleoproteins (hnRNPs) and small nuclear ribonucleoproteins (snRNPs). Methylates NAB2, NPL3, HRP1 and YRA1, shuttling hnRNPs involved in mRNA processing and export, facilitating their export out of the nucleus. Methylation of NPL3 weakens its interaction with THO2, a component of the TREX (transcription/export) complex important for transcriptional elongation and recruitment of mRNA export factors. Methylates the hnRNP HRB1, but does not influence its subcellular location. Methylates the nucleolar proteins GAR1, NOP1 and NSR1. Methylates the snRNP SNP1 and modulates the cotranscriptional recruitment of splicing factors. Dimethylates free histone H4 (HHF1/HHF2) at 'Arg-4' (H4R3me2a) and plays a role in preservation and establishment of silent chromatin domains. Mono- and dimethylates ribosomal protein S2 (RPS2) at 'Arg-11'. Methylates the catalytic subunit of the SWI/SNF chromatin-remodeling complex SNF2. The sequence is that of Protein arginine N-methyltransferase 1 from Saccharomyces cerevisiae (strain ATCC 204508 / S288c) (Baker's yeast).